Here is a 447-residue protein sequence, read N- to C-terminus: Tubulin beta-2 chain (447 aa).

GTP is bound by residues Gln-9, Glu-67, Ser-136, Gly-140, Thr-141, Gly-142, Asn-202, and Asn-224. Residue Glu-67 participates in Mg(2+) binding. The segment covering 411–425 (SNMNDLVSEYQQYQD) has biased composition (polar residues). Residues 411-447 (SNMNDLVSEYQQYQDATAEEDEYEEEEEDYHQEHDEM) are disordered. Residues 427–440 (TAEEDEYEEEEEDY) are compositionally biased toward acidic residues.

Belongs to the tubulin family. As to quaternary structure, dimer of alpha and beta chains. A typical microtubule is a hollow water-filled tube with an outer diameter of 25 nm and an inner diameter of 15 nM. Alpha-beta heterodimers associate head-to-tail to form protofilaments running lengthwise along the microtubule wall with the beta-tubulin subunit facing the microtubule plus end conferring a structural polarity. Microtubules usually have 13 protofilaments but different protofilament numbers can be found in some organisms and specialized cells. Mg(2+) serves as cofactor.

It is found in the cytoplasm. The protein resides in the cytoskeleton. Tubulin is the major constituent of microtubules, a cylinder consisting of laterally associated linear protofilaments composed of alpha- and beta-tubulin heterodimers. Microtubules grow by the addition of GTP-tubulin dimers to the microtubule end, where a stabilizing cap forms. Below the cap, tubulin dimers are in GDP-bound state, owing to GTPase activity of alpha-tubulin. This chain is Tubulin beta-2 chain (TUBB2), found in Pisum sativum (Garden pea).